A 226-amino-acid chain; its full sequence is UPF0173 metal-dependent hydrolase SRU_1937 (226 aa).

Belongs to the UPF0173 family.

This Salinibacter ruber (strain DSM 13855 / M31) protein is UPF0173 metal-dependent hydrolase SRU_1937.